The chain runs to 220 residues: Uracil-DNA glycosylase 2 (220 aa).

Aspartate 65 (proton acceptor) is an active-site residue.

The protein belongs to the uracil-DNA glycosylase (UDG) superfamily. UNG family.

Its subcellular location is the cytoplasm. It catalyses the reaction Hydrolyzes single-stranded DNA or mismatched double-stranded DNA and polynucleotides, releasing free uracil.. Functionally, excises uracil residues from the DNA which can arise as a result of misincorporation of dUMP residues by DNA polymerase or due to deamination of cytosine. The protein is Uracil-DNA glycosylase 2 of Bacteroides fragilis (strain ATCC 25285 / DSM 2151 / CCUG 4856 / JCM 11019 / LMG 10263 / NCTC 9343 / Onslow / VPI 2553 / EN-2).